A 174-amino-acid chain; its full sequence is MGKIIFYEDRNFQGRSYECSSDCSDMSTYLSRCHSCRVESGCFVVYDVPNYMGNQFFMRRGEYADYMRMGMSDGIRSCRMVPQYRGPYRMRIYERENFGGQMYDLTDDCDSFVDRYRMSDCQSCHVMDGHWLMYEQPHYRGRIVYFRPGEYRSFRDMGYSNVKFSSVRRIMDLC.

2 consecutive Beta/gamma crystallin 'Greek key' domains span residues 2-40 (GKII…RVES) and 41-82 (GCFV…RMVP). Residues 83–87 (QYRGP) form a connecting peptide region. 2 Beta/gamma crystallin 'Greek key' domains span residues 88–128 (YRMR…HVMD) and 129–171 (GHWL…RRIM).

It belongs to the beta/gamma-crystallin family. In terms of assembly, monomer.

Functionally, crystallins are the dominant structural components of the vertebrate eye lens. The sequence is that of Gamma-crystallin M3 from Cyprinus carpio (Common carp).